A 319-amino-acid chain; its full sequence is tRNA dimethylallyltransferase (319 aa).

11 to 18 (GPTCSGKS) contributes to the ATP binding site. 13–18 (TCSGKS) lines the substrate pocket. Interaction with substrate tRNA stretches follow at residues 36–39 (DSMQ) and 160–164 (QRIAR).

Belongs to the IPP transferase family. Monomer. Mg(2+) is required as a cofactor.

It catalyses the reaction adenosine(37) in tRNA + dimethylallyl diphosphate = N(6)-dimethylallyladenosine(37) in tRNA + diphosphate. In terms of biological role, catalyzes the transfer of a dimethylallyl group onto the adenine at position 37 in tRNAs that read codons beginning with uridine, leading to the formation of N6-(dimethylallyl)adenosine (i(6)A). This is tRNA dimethylallyltransferase from Granulibacter bethesdensis (strain ATCC BAA-1260 / CGDNIH1).